A 290-amino-acid chain; its full sequence is uncharacterized protein (290 aa).

Disordered stretches follow at residues 17 to 91 (QTIS…EKNS) and 220 to 259 (DKAS…QMPN). Residues 40-50 (NITTHLSTGNL) are compositionally biased toward polar residues. Over residues 66–83 (STKKGKRVSKPGTKKKEK) the composition is skewed to basic residues. Positions 233–249 (EGEKDGNAEQGKQKEVQ) are enriched in basic and acidic residues.

This is an uncharacterized protein from Saccharomyces cerevisiae (strain ATCC 204508 / S288c) (Baker's yeast).